The primary structure comprises 284 residues: Pantothenate synthetase (284 aa).

Position 30–37 (30–37 (MGYLHEGH)) interacts with ATP. His-37 (proton donor) is an active-site residue. A (R)-pantoate-binding site is contributed by Gln-61. Beta-alanine is bound at residue Gln-61. 147 to 150 (GQKD) provides a ligand contact to ATP. Gln-153 is a (R)-pantoate binding site. ATP contacts are provided by residues Val-176 and 184 to 187 (KSSR).

The protein belongs to the pantothenate synthetase family. As to quaternary structure, homodimer.

The protein resides in the cytoplasm. It catalyses the reaction (R)-pantoate + beta-alanine + ATP = (R)-pantothenate + AMP + diphosphate + H(+). It participates in cofactor biosynthesis; (R)-pantothenate biosynthesis; (R)-pantothenate from (R)-pantoate and beta-alanine: step 1/1. In terms of biological role, catalyzes the condensation of pantoate with beta-alanine in an ATP-dependent reaction via a pantoyl-adenylate intermediate. This is Pantothenate synthetase from Lysinibacillus sphaericus (strain C3-41).